The sequence spans 128 residues: Flagellar assembly factor FliW (128 aa).

Belongs to the FliW family. In terms of assembly, interacts with translational regulator CsrA and flagellin(s).

The protein resides in the cytoplasm. Functionally, acts as an anti-CsrA protein, binds CsrA and prevents it from repressing translation of its target genes, one of which is flagellin. Binds to flagellin and participates in the assembly of the flagellum. In Campylobacter fetus subsp. fetus (strain 82-40), this protein is Flagellar assembly factor FliW.